Here is a 179-residue protein sequence, read N- to C-terminus: Inosine/xanthosine triphosphatase (179 aa).

8–13 (TTNPAK) contacts substrate. Mg(2+) is bound by residues aspartate 38 and glutamate 68. 68-69 (EA) contributes to the substrate binding site.

This sequence belongs to the YjjX NTPase family. Homodimer. Requires Mg(2+) as cofactor. The cofactor is Mn(2+).

The enzyme catalyses XTP + H2O = XDP + phosphate + H(+). The catalysed reaction is ITP + H2O = IDP + phosphate + H(+). Functionally, phosphatase that hydrolyzes non-canonical purine nucleotides such as XTP and ITP to their respective diphosphate derivatives. Probably excludes non-canonical purines from DNA/RNA precursor pool, thus preventing their incorporation into DNA/RNA and avoiding chromosomal lesions. The polypeptide is Inosine/xanthosine triphosphatase (Proteus mirabilis (strain HI4320)).